The primary structure comprises 300 residues: Haloalkane dehalogenase 1 (300 aa).

Residues 47 to 176 (PPIVLLHGEP…FARYSPVLPA (130 aa)) enclose the AB hydrolase-1 domain. Asp-123 serves as the catalytic Nucleophile. Asp-250 functions as the Proton donor in the catalytic mechanism. The Proton acceptor role is filled by His-279.

It belongs to the haloalkane dehalogenase family. Type 1 subfamily. As to quaternary structure, monomer.

The enzyme catalyses 1-haloalkane + H2O = a halide anion + a primary alcohol + H(+). In terms of biological role, catalyzes hydrolytic cleavage of carbon-halogen bonds in halogenated aliphatic compounds, leading to the formation of the corresponding primary alcohols, halide ions and protons. This chain is Haloalkane dehalogenase 1 (dhmA1), found in Mycobacterium bovis (strain ATCC BAA-935 / AF2122/97).